The following is a 1013-amino-acid chain: Tolloid-like protein 1 (1013 aa).

The N-terminal stretch at 1–30 (MGLGTLSPRMLVWLVASGIVFYGELWVCAG) is a signal peptide. The propeptide occupies 31–147 (LDYDYTFDGN…GQNEKNRVPR (117 aa)). The Peptidase M12A domain occupies 148–347 (AATSRTERIW…AQARKLYRCP (200 aa)). Residue Asn-169 is glycosylated (N-linked (GlcNAc...) asparagine). Intrachain disulfides connect Cys-190–Cys-346, Cys-210–Cys-232, Cys-212–Cys-213, and Cys-349–Cys-375. Residue His-240 coordinates Zn(2+). The active site involves Glu-241. Residues His-244 and His-250 each contribute to the Zn(2+) site. CUB domains lie at 349–461 (CGET…YEAI) and 462–574 (CGGE…FFKE). Asn-359 and Asn-390 each carry an N-linked (GlcNAc...) asparagine glycan. 15 disulfide bridges follow: Cys-402/Cys-424, Cys-462/Cys-488, Cys-515/Cys-537, Cys-578/Cys-590, Cys-586/Cys-599, Cys-601/Cys-614, Cys-618/Cys-644, Cys-671/Cys-693, Cys-734/Cys-745, Cys-741/Cys-754, Cys-756/Cys-769, Cys-774/Cys-800, Cys-827/Cys-849, Cys-887/Cys-917, and Cys-944/Cys-966. One can recognise an EGF-like 1; calcium-binding domain in the interval 574–615 (EEDECAKPDRGGCEQRCLNTLGSYQCACEPGYELGPDRRSCE). Residues 618–730 (CGGLLTKLNG…KGFKAHFFSD (113 aa)) enclose the CUB 3 domain. Residue Asn-626 is glycosylated (N-linked (GlcNAc...) asparagine). Positions 730–770 (DKDECSKDNGGCQHECVNTMGSYMCQCRNGFVLHDNKHDCK) constitute an EGF-like 2; calcium-binding domain. CUB domains lie at 774-886 (CEQK…HSTE) and 887-1003 (CGGR…YKSI).

The cofactor is Zn(2+).

The protein localises to the secreted. Protease which processes procollagen C-propeptides, such as chordin, pro-biglycan and pro-lysyl oxidase. Required for the embryonic development. Predominant protease, which in the development, influences dorsal-ventral patterning and skeletogenesis. The chain is Tolloid-like protein 1 (TLL1) from Homo sapiens (Human).